The following is a 1038-amino-acid chain: Type I restriction enzyme EcoR124I/EcoR124II endonuclease subunit (1038 aa).

A nuclease domain region spans residues 31-249; it reads QSESDLEREL…LKDFTATCFQ (219 aa). The motor 1 domain stretch occupies residues 250–469; sequence KHTLLNVLVN…SYVITDAIRD (220 aa). Residues 294 to 439 form the Helicase ATP-binding domain; the sequence is KNWSKPESGG…YQFGFTGTPI (146 aa). Residue 307–314 coordinates ATP; that stretch reads HTTGSGKT. The DEAH box motif lies at 408-411; sequence DECH. The tract at residues 470–702 is motor 2 domain; sequence EKVLKFKVDY…YDATKTFGNI (233 aa). The interval 720–732 is motor 2-helicase linker; sequence GDKNTKNVVLEKS. The tract at residues 732–860 is helicase domain; it reads SYTEYMEGFT…NDIRDWQRRE (129 aa). Residues 859-886 are helicase-CTD linker; sequence REKEAEKKEKSTTDWDDVVFEVDLLKSQ. Residues 886–1038 form a C-terminal domain region; sequence QEINLDYILG…EKFKGVGGKI (153 aa).

This sequence belongs to the HsdR family. In terms of assembly, a monomer in solution. The type I restriction/modification system is composed of three polypeptides R, M and S; the restriction enzyme has stoichiometry R(2)M(2)S(1) while the methyltransferase is M(2)S(1). There is an equilibrium between R(2)M(2)S(1) and R(1)M(2)S(1); the latter is methylation and translocation proficient but restriction deficient. (Microbial infection) Holoenenzyme interacts with Escherichia phage T7 protein Ocr; this interaction leads to the inhibition of the restriction activity, but may still allow methylation and translocation.

It carries out the reaction Endonucleolytic cleavage of DNA to give random double-stranded fragments with terminal 5'-phosphates, ATP is simultaneously hydrolyzed.. The restriction (R) subunit of a type I restriction enzyme that recognizes 5'-GAAN(6)RTCG-3' (for EcoR124I) and 5'-GAAN(7)RTCG-3' (for EcoR124II) and cleaves a random distance away. Subunit R is required for both nuclease and ATPase activities, but not for modification. After locating an unmethylated recognition site, the enzyme complex serves as a molecular motor that translocates DNA in an ATP-dependent manner until a collision occurs that triggers cleavage. The enzyme undergoes major structural changes to bring the motor domains into contact with DNA, allowing DNA translocation. This prevents DNA access to the catalytic domains of both the R and M subunits, preventing both restriction and methylation. The R(1)M(2)S(1) complex translocates an average of 555 bp/second on nicked DNA; the R(2)M(2)S(1) complex translocates at double that speed. The 2 R subunit motors are independent and track along the helical pitch of the DNA, inducing positive supercoiling ahead of themselves. The sequence is that of Type I restriction enzyme EcoR124I/EcoR124II endonuclease subunit from Escherichia coli.